Reading from the N-terminus, the 379-residue chain is UPF0450 protein C17orf58 homolog (379 aa).

A signal peptide spans 1–17; sequence MIPALTVPLLFLCATSA. Disordered regions lie at residues 76 to 95 and 162 to 194; these read RTRA…PDKT and TASQ…MNPH. Residues 180 to 194 show a composition bias toward basic and acidic residues; sequence SMDHESNRPGKMNPH. Intrachain disulfides connect Cys-234–Cys-308, Cys-238–Cys-312, and Cys-249–Cys-378. The NTR domain occupies 234–378; that stretch reads CIAECHRDKD…KVLAAAHSKC (145 aa).

This sequence belongs to the UPF0450 family.

This Xenopus laevis (African clawed frog) protein is UPF0450 protein C17orf58 homolog.